A 745-amino-acid polypeptide reads, in one-letter code: Catalase-peroxidase (745 aa).

The tryptophyl-tyrosyl-methioninium (Trp-Tyr) (with M-249) cross-link spans 97–223; that stretch reads WHSAGTYRTG…LAAVQMGLIY (127 aa). Catalysis depends on H98, which acts as the Proton acceptor. The segment at residues 223 to 249 is a cross-link (tryptophyl-tyrosyl-methioninium (Tyr-Met) (with W-97)); it reads YVNPEGPDGSPDPWASARDIRMTFARM. H264 provides a ligand contact to heme b. Positions 345-368 are disordered; sequence KQWQPVNPKPEDLAPGAHSPDRRV.

The protein belongs to the peroxidase family. Peroxidase/catalase subfamily. In terms of assembly, homodimer or homotetramer. Heme b is required as a cofactor. Post-translationally, formation of the three residue Trp-Tyr-Met cross-link is important for the catalase, but not the peroxidase activity of the enzyme.

It catalyses the reaction H2O2 + AH2 = A + 2 H2O. It carries out the reaction 2 H2O2 = O2 + 2 H2O. Functionally, bifunctional enzyme with both catalase and broad-spectrum peroxidase activity. This Phenylobacterium zucineum (strain HLK1) protein is Catalase-peroxidase.